The primary structure comprises 473 residues: ATP synthase subunit beta (473 aa).

153–160 is an ATP binding site; it reads GGAGVGKT.

The protein belongs to the ATPase alpha/beta chains family. As to quaternary structure, F-type ATPases have 2 components, CF(1) - the catalytic core - and CF(0) - the membrane proton channel. CF(1) has five subunits: alpha(3), beta(3), gamma(1), delta(1), epsilon(1). CF(0) has three main subunits: a(1), b(2) and c(9-12). The alpha and beta chains form an alternating ring which encloses part of the gamma chain. CF(1) is attached to CF(0) by a central stalk formed by the gamma and epsilon chains, while a peripheral stalk is formed by the delta and b chains.

The protein localises to the cell inner membrane. It carries out the reaction ATP + H2O + 4 H(+)(in) = ADP + phosphate + 5 H(+)(out). In terms of biological role, produces ATP from ADP in the presence of a proton gradient across the membrane. The catalytic sites are hosted primarily by the beta subunits. This Rickettsia massiliae (strain Mtu5) protein is ATP synthase subunit beta.